The primary structure comprises 137 residues: Small ribosomal subunit protein uS12 (137 aa).

Residues 33–57 are disordered; that stretch reads KVQTNVSSPQKRGVATRVGTMTPKK. Asp102 bears the 3-methylthioaspartic acid mark.

This sequence belongs to the universal ribosomal protein uS12 family. Part of the 30S ribosomal subunit. Contacts proteins S8 and S17. May interact with IF1 in the 30S initiation complex.

Its function is as follows. With S4 and S5 plays an important role in translational accuracy. Functionally, interacts with and stabilizes bases of the 16S rRNA that are involved in tRNA selection in the A site and with the mRNA backbone. Located at the interface of the 30S and 50S subunits, it traverses the body of the 30S subunit contacting proteins on the other side and probably holding the rRNA structure together. The combined cluster of proteins S8, S12 and S17 appears to hold together the shoulder and platform of the 30S subunit. The sequence is that of Small ribosomal subunit protein uS12 from Streptococcus thermophilus (strain CNRZ 1066).